Consider the following 348-residue polypeptide: Alcohol dehydrogenase 1 (348 aa).

Cys-44, His-67, Cys-98, Cys-101, Cys-104, Cys-112, and Cys-154 together coordinate Zn(2+). NAD(+) contacts are provided by residues Gly-178–Gly-184, Asp-202, Lys-207, Val-269–Leu-271, and Arg-341.

The protein belongs to the zinc-containing alcohol dehydrogenase family. As to quaternary structure, homotetramer. Requires Zn(2+) as cofactor.

The protein localises to the cytoplasm. It catalyses the reaction a primary alcohol + NAD(+) = an aldehyde + NADH + H(+). The catalysed reaction is a secondary alcohol + NAD(+) = a ketone + NADH + H(+). This is Alcohol dehydrogenase 1 (ADH1) from Kluyveromyces marxianus (Yeast).